Consider the following 114-residue polypeptide: MIKGLAITVVAVLAVVQLLARPSDAAVSCGQVDTSLTPCLTYLTKGGTPSTQCCSGVRSLKSMTGTKADRQAACNCLKQAAARYQGIKDAAAAALSQKCGVQLSVPISRKTDCS.

The first 25 residues, 1-25, serve as a signal peptide directing secretion; sequence MIKGLAITVVAVLAVVQLLARPSDA. 4 disulfide bridges follow: Cys29/Cys76, Cys39/Cys53, Cys54/Cys99, and Cys74/Cys113.

The protein belongs to the plant LTP family. As to expression, expressed in seeds and, at very low levels, in pulp of fruit (at protein level).

Functionally, plant non-specific lipid-transfer proteins transfer phospholipids as well as galactolipids across membranes. May play a role in wax or cutin deposition in the cell walls of expanding epidermal cells and certain secretory tissues. The chain is Non-specific lipid-transfer protein 1 from Actinidia chinensis var. chinensis (Chinese soft-hair kiwi).